A 265-amino-acid chain; its full sequence is UPF0354 protein BH3252 (265 aa).

It belongs to the UPF0354 family.

The chain is UPF0354 protein BH3252 from Halalkalibacterium halodurans (strain ATCC BAA-125 / DSM 18197 / FERM 7344 / JCM 9153 / C-125) (Bacillus halodurans).